The sequence spans 354 residues: Probable glucan endo-1,3-beta-glucosidase BG5 (354 aa).

Residues Met-1–Ala-30 form the signal peptide. The active-site Proton donor is Glu-137. The active-site Nucleophile is Glu-276. N-linked (GlcNAc...) asparagine glycosylation is present at Asn-286.

The protein belongs to the glycosyl hydrolase 17 family.

The protein localises to the secreted. The enzyme catalyses Hydrolysis of (1-&gt;3)-beta-D-glucosidic linkages in (1-&gt;3)-beta-D-glucans.. Functionally, may play a role in plant defense against pathogens. The protein is Probable glucan endo-1,3-beta-glucosidase BG5 of Arabidopsis thaliana (Mouse-ear cress).